Consider the following 343-residue polypeptide: Probable dual-specificity RNA methyltransferase RlmN (343 aa).

Catalysis depends on glutamate 91, which acts as the Proton acceptor. In terms of domain architecture, Radical SAM core spans 97–326 (HPDRITACIS…AEIRREKGSD (230 aa)). A disulfide bridge links cysteine 104 with cysteine 331. Residues cysteine 111, cysteine 115, and cysteine 118 each contribute to the [4Fe-4S] cluster site. Residues 158–159 (GE), serine 190, 213–215 (SLH), and asparagine 289 each bind S-adenosyl-L-methionine. Cysteine 331 acts as the S-methylcysteine intermediate in catalysis.

This sequence belongs to the radical SAM superfamily. RlmN family. [4Fe-4S] cluster serves as cofactor.

The protein resides in the cytoplasm. It catalyses the reaction adenosine(2503) in 23S rRNA + 2 reduced [2Fe-2S]-[ferredoxin] + 2 S-adenosyl-L-methionine = 2-methyladenosine(2503) in 23S rRNA + 5'-deoxyadenosine + L-methionine + 2 oxidized [2Fe-2S]-[ferredoxin] + S-adenosyl-L-homocysteine. The enzyme catalyses adenosine(37) in tRNA + 2 reduced [2Fe-2S]-[ferredoxin] + 2 S-adenosyl-L-methionine = 2-methyladenosine(37) in tRNA + 5'-deoxyadenosine + L-methionine + 2 oxidized [2Fe-2S]-[ferredoxin] + S-adenosyl-L-homocysteine. Functionally, specifically methylates position 2 of adenine 2503 in 23S rRNA and position 2 of adenine 37 in tRNAs. In Thermotoga sp. (strain RQ2), this protein is Probable dual-specificity RNA methyltransferase RlmN.